The sequence spans 524 residues: Bifunctional purine biosynthesis protein PurH (524 aa).

One can recognise an MGS-like domain in the interval methionine 1–cysteine 154.

It belongs to the PurH family.

It catalyses the reaction (6R)-10-formyltetrahydrofolate + 5-amino-1-(5-phospho-beta-D-ribosyl)imidazole-4-carboxamide = 5-formamido-1-(5-phospho-D-ribosyl)imidazole-4-carboxamide + (6S)-5,6,7,8-tetrahydrofolate. The enzyme catalyses IMP + H2O = 5-formamido-1-(5-phospho-D-ribosyl)imidazole-4-carboxamide. It participates in purine metabolism; IMP biosynthesis via de novo pathway; 5-formamido-1-(5-phospho-D-ribosyl)imidazole-4-carboxamide from 5-amino-1-(5-phospho-D-ribosyl)imidazole-4-carboxamide (10-formyl THF route): step 1/1. It functions in the pathway purine metabolism; IMP biosynthesis via de novo pathway; IMP from 5-formamido-1-(5-phospho-D-ribosyl)imidazole-4-carboxamide: step 1/1. The polypeptide is Bifunctional purine biosynthesis protein PurH (Acaryochloris marina (strain MBIC 11017)).